Here is a 37-residue protein sequence, read N- to C-terminus: U12-myrmicitoxin-Mri1a (37 aa).

Positions 1–23 (MKTIELITIFAMITTLMVTVVAG) are cleaved as a signal peptide. A propeptide spanning residues 24–25 (DP) is cleaved from the precursor. Residue Val35 is modified to Valine amide.

As to expression, expressed by the venom gland.

The protein resides in the secreted. In terms of biological role, toxin that induces mild paralysis, and reduces survival and reproduction when injected into aphids (A.pisum). May affect various processes in the aphid, including wound healing and hemolymph coagulation. It does not increase the sensitivity of the aphids to the chemical insecticides imidacloprid, methomyl and Spirotetramat. Has no insecticidal activity when injected into blowfly (L.caesar). Does not display any antibacterial or antifungal activity. The polypeptide is U12-myrmicitoxin-Mri1a (Manica rubida (European giant red ant)).